Consider the following 406-residue polypeptide: Arginine biosynthesis bifunctional protein ArgJ (406 aa).

Thr152, Lys179, Thr190, Glu277, Asn401, and Ser406 together coordinate substrate. Residue Thr190 is the Nucleophile of the active site.

It belongs to the ArgJ family. In terms of assembly, heterotetramer of two alpha and two beta chains.

It is found in the cytoplasm. It catalyses the reaction N(2)-acetyl-L-ornithine + L-glutamate = N-acetyl-L-glutamate + L-ornithine. The catalysed reaction is L-glutamate + acetyl-CoA = N-acetyl-L-glutamate + CoA + H(+). Its pathway is amino-acid biosynthesis; L-arginine biosynthesis; L-ornithine and N-acetyl-L-glutamate from L-glutamate and N(2)-acetyl-L-ornithine (cyclic): step 1/1. It functions in the pathway amino-acid biosynthesis; L-arginine biosynthesis; N(2)-acetyl-L-ornithine from L-glutamate: step 1/4. Catalyzes two activities which are involved in the cyclic version of arginine biosynthesis: the synthesis of N-acetylglutamate from glutamate and acetyl-CoA as the acetyl donor, and of ornithine by transacetylation between N(2)-acetylornithine and glutamate. This is Arginine biosynthesis bifunctional protein ArgJ from Neisseria gonorrhoeae (strain ATCC 700825 / FA 1090).